We begin with the raw amino-acid sequence, 180 residues long: Acireductone dioxygenase (180 aa).

The Fe(2+) site is built by H97, H99, E103, and H141. The Ni(2+) site is built by H97, H99, E103, and H141.

Belongs to the acireductone dioxygenase (ARD) family. Monomer. Fe(2+) serves as cofactor. Ni(2+) is required as a cofactor.

It catalyses the reaction 1,2-dihydroxy-5-(methylsulfanyl)pent-1-en-3-one + O2 = 3-(methylsulfanyl)propanoate + CO + formate + 2 H(+). The enzyme catalyses 1,2-dihydroxy-5-(methylsulfanyl)pent-1-en-3-one + O2 = 4-methylsulfanyl-2-oxobutanoate + formate + 2 H(+). Its pathway is amino-acid biosynthesis; L-methionine biosynthesis via salvage pathway; L-methionine from S-methyl-5-thio-alpha-D-ribose 1-phosphate: step 5/6. In terms of biological role, catalyzes 2 different reactions between oxygen and the acireductone 1,2-dihydroxy-3-keto-5-methylthiopentene (DHK-MTPene) depending upon the metal bound in the active site. Fe-containing acireductone dioxygenase (Fe-ARD) produces formate and 2-keto-4-methylthiobutyrate (KMTB), the alpha-ketoacid precursor of methionine in the methionine recycle pathway. Ni-containing acireductone dioxygenase (Ni-ARD) produces methylthiopropionate, carbon monoxide and formate, and does not lie on the methionine recycle pathway. This Yersinia enterocolitica serotype O:8 / biotype 1B (strain NCTC 13174 / 8081) protein is Acireductone dioxygenase.